A 487-amino-acid polypeptide reads, in one-letter code: Protein nucleotidyltransferase YdiU (487 aa).

ATP contacts are provided by Gly-90, Gly-92, Arg-93, Lys-113, Asp-125, Gly-126, Arg-176, and Arg-183. Asp-252 (proton acceptor) is an active-site residue. Positions 253 and 262 each coordinate Mg(2+). Residue Asp-262 coordinates ATP.

It belongs to the SELO family. Mg(2+) is required as a cofactor. It depends on Mn(2+) as a cofactor.

The enzyme catalyses L-seryl-[protein] + ATP = 3-O-(5'-adenylyl)-L-seryl-[protein] + diphosphate. It catalyses the reaction L-threonyl-[protein] + ATP = 3-O-(5'-adenylyl)-L-threonyl-[protein] + diphosphate. The catalysed reaction is L-tyrosyl-[protein] + ATP = O-(5'-adenylyl)-L-tyrosyl-[protein] + diphosphate. It carries out the reaction L-histidyl-[protein] + UTP = N(tele)-(5'-uridylyl)-L-histidyl-[protein] + diphosphate. The enzyme catalyses L-seryl-[protein] + UTP = O-(5'-uridylyl)-L-seryl-[protein] + diphosphate. It catalyses the reaction L-tyrosyl-[protein] + UTP = O-(5'-uridylyl)-L-tyrosyl-[protein] + diphosphate. Functionally, nucleotidyltransferase involved in the post-translational modification of proteins. It can catalyze the addition of adenosine monophosphate (AMP) or uridine monophosphate (UMP) to a protein, resulting in modifications known as AMPylation and UMPylation. The chain is Protein nucleotidyltransferase YdiU from Pseudomonas fluorescens (strain SBW25).